We begin with the raw amino-acid sequence, 344 residues long: Phosphate acyltransferase (344 aa).

It belongs to the PlsX family. As to quaternary structure, homodimer. Probably interacts with PlsY.

It localises to the cytoplasm. It carries out the reaction a fatty acyl-[ACP] + phosphate = an acyl phosphate + holo-[ACP]. Its pathway is lipid metabolism; phospholipid metabolism. Functionally, catalyzes the reversible formation of acyl-phosphate (acyl-PO(4)) from acyl-[acyl-carrier-protein] (acyl-ACP). This enzyme utilizes acyl-ACP as fatty acyl donor, but not acyl-CoA. The chain is Phosphate acyltransferase from Sodalis glossinidius (strain morsitans).